The chain runs to 92 residues: MARSLKKGPFVDDHLMAKVEKLNETDKKQVVKTWSRRSTIFPQFIGHTIAVYDGRKHVPVFISEDMVGHKLGEFAPSRTYKGHASDDKKTRR.

The protein belongs to the universal ribosomal protein uS19 family.

Functionally, protein S19 forms a complex with S13 that binds strongly to the 16S ribosomal RNA. In Bacillus pumilus (strain SAFR-032), this protein is Small ribosomal subunit protein uS19.